The following is a 572-amino-acid chain: RNA polymerase sigma factor sigB (572 aa).

The transit peptide at 1-39 directs the protein to the chloroplast; that stretch reads MSSCLLPQFKCPPDSFSIHFRTSFCAPKHNKGSVFFQPQ. The tract at residues 215-249 is disordered; it reads TRQTERKARRAKGLEKTASGIPSVKTGSSPKKKRL. The Polymerase core binding motif lies at 360–373; that stretch reads DLVQEGCRGLVRGA. The segment at residues 530–549 is a DNA-binding region (H-T-H motif); it reads LQEIGEMMGVSRERVRQIES.

The protein belongs to the sigma-70 factor family. In terms of tissue distribution, highly expressed in cotyledons, to a lesser extent in leaves, sepals and siliques, and barely expressed in roots. Present in seedlings.

The protein localises to the plastid. It localises to the chloroplast. Required for the transition of plastids into chloroplasts by coordinating nuclear and chloroplastic genomes under light conditions. Sigma factors are initiation factors that promote the attachment of plastid-encoded RNA polymerase (PEP) to specific initiation sites and are then released. Promotes the biosynthesis of plastid-encoded tRNAs (e.g. trnE-UUC and trnV-UAC). This is RNA polymerase sigma factor sigB (SIGB) from Arabidopsis thaliana (Mouse-ear cress).